The chain runs to 247 residues: Probable membrane transporter protein y4hK (247 aa).

The next 6 helical transmembrane spans lie at 5-25 (AIGL…VGQA), 31-51 (IAAM…ALAL), 74-94 (VYPF…VHLP), 121-141 (SALV…ITGA), 202-222 (FLPW…LIGS), and 227-247 (ASWL…KLLW).

Belongs to the 4-toluene sulfonate uptake permease (TSUP) (TC 2.A.102) family.

It localises to the cell membrane. This chain is Probable membrane transporter protein y4hK, found in Sinorhizobium fredii (strain NBRC 101917 / NGR234).